The following is a 212-amino-acid chain: Ribosomal RNA small subunit methyltransferase G (212 aa).

S-adenosyl-L-methionine-binding positions include glycine 73, 127-128 (IE), and arginine 143.

This sequence belongs to the methyltransferase superfamily. RNA methyltransferase RsmG family.

The protein resides in the cytoplasm. It catalyses the reaction guanosine(527) in 16S rRNA + S-adenosyl-L-methionine = N(7)-methylguanosine(527) in 16S rRNA + S-adenosyl-L-homocysteine. Functionally, specifically methylates the N7 position of guanine in position 527 of 16S rRNA. The polypeptide is Ribosomal RNA small subunit methyltransferase G (Methylobacterium sp. (strain 4-46)).